Consider the following 215-residue polypeptide: Chymomexicain (215 aa).

3 cysteine pairs are disulfide-bonded: Cys-22-Cys-63, Cys-56-Cys-96, and Cys-154-Cys-201. The active site involves Cys-25. Residues His-160 and Asn-176 contribute to the active site.

Belongs to the peptidase C1 family.

In terms of biological role, cysteine protease. The chain is Chymomexicain from Jacaratia mexicana (Wild papaya).